Here is a 76-residue protein sequence, read N- to C-terminus: U-scoloptoxin(13)-Sm1a (76 aa).

The N-terminal stretch at 1-22 is a signal peptide; the sequence is MAYICAXTLAFLLCVNTGIIQA.

This sequence belongs to the scoloptoxin-13 family. Post-translationally, contains 4 disulfide bonds. Expressed by the venom gland.

The protein localises to the secreted. The polypeptide is U-scoloptoxin(13)-Sm1a (Scolopendra morsitans (Tanzanian blue ringleg centipede)).